The primary structure comprises 533 residues: Multicopy suppressor of sporulation protein msa1 (533 aa).

The segment at 30–68 is disordered; that stretch reads DIPPGSLSENDNSTTFIKPPLETASSSTPIPSSSSSGVL. The span at 36–45 shows a compositional bias: polar residues; that stretch reads LSENDNSTTF. Residues 54–68 are compositionally biased toward low complexity; sequence SSSTPIPSSSSSGVL. The RRM 1 domain occupies 79–158; that stretch reads ACLFVASLNS…RHIRIERAKV (80 aa). Residues 237-292 form a disordered region; the sequence is YKKKGSSPFSPPNAHSRRRKSQGKDQSNTPVIKAPAPIPFSVSSDPPSTMGRSNSA. Residues 277–292 are compositionally biased toward polar residues; that stretch reads SVSSDPPSTMGRSNSA. In terms of domain architecture, RRM 2 spans 365–441; it reads YSIFVGQLDP…KPLRVEFRQL (77 aa).

It localises to the cytoplasm. In terms of biological role, negative regulator of sexual differentiation. Acts by repressing the transcription of meiosis-inducing, ste11-regulated genes. This is Multicopy suppressor of sporulation protein msa1 (msa1) from Schizosaccharomyces pombe (strain 972 / ATCC 24843) (Fission yeast).